The following is a 378-amino-acid chain: Mannitol-1-phosphate 5-dehydrogenase (378 aa).

An NAD(+)-binding site is contributed by 4-15 (SVHFGAGNIGRG).

It belongs to the mannitol dehydrogenase family.

It catalyses the reaction D-mannitol 1-phosphate + NAD(+) = beta-D-fructose 6-phosphate + NADH + H(+). The protein is Mannitol-1-phosphate 5-dehydrogenase of Streptococcus pneumoniae (strain 70585).